The primary structure comprises 358 residues: MATEQWFEGSLPLDPGETPPPDALEPGTPPCGDPSRSTPPGRPGNPSEPDPEDAEGRLAEARASTSSPKPLVPRPGPAPPRLSLDTLFSPITQQLRYLLKKADDFQSYLLYSRDQVQKEQLAKAMPTFLQMCEPYFLYLEAAARSIPPIYGPLQELVRKGLLEISQQLTLRLEQLVLMYASFGFVDLEEMNPLSISCFFCGRFSISLSHEVSIFRYCAPTAYTASRFPRYLYKKMRWHLEATPEAPGRGQDSLVDYYFLCYRDTWEDTGQSPANSCPQIQKLWSIGRWVPLGPAEDDLYSWILCPQPLGDYQQLLTIGFEEPTPTLATDLLVQILTGQAGQARPPSAAGPAGWAAQGS.

The tract at residues 1 to 84 (MATEQWFEGS…PGPAPPRLSL (84 aa)) is disordered. Pro residues-rich tracts occupy residues 17–32 (ETPPPDALEPGTPPCG) and 70–80 (PLVPRPGPAPP).

Belongs to the UPF0575 family.

The chain is UPF0575 protein C19orf67 (C19orf67) from Homo sapiens (Human).